The chain runs to 328 residues: Mannitol-1-phosphate 5-dehydrogenase (328 aa).

Leu-3–Gly-14 contacts NAD(+).

The protein belongs to the mannitol dehydrogenase family.

The enzyme catalyses D-mannitol 1-phosphate + NAD(+) = beta-D-fructose 6-phosphate + NADH + H(+). The chain is Mannitol-1-phosphate 5-dehydrogenase (mtlD) from Mycoplasma mycoides subsp. mycoides SC (strain CCUG 32753 / NCTC 10114 / PG1).